The following is a 231-amino-acid chain: 5'-methylthioadenosine/S-adenosylhomocysteine nucleosidase (231 aa).

Glu12 functions as the Proton acceptor in the catalytic mechanism. Residues Gly78, Val153, and 174 to 175 each bind substrate; that span reads ME. The active-site Proton donor is the Asp198.

Belongs to the PNP/UDP phosphorylase family. MtnN subfamily.

The catalysed reaction is S-adenosyl-L-homocysteine + H2O = S-(5-deoxy-D-ribos-5-yl)-L-homocysteine + adenine. The enzyme catalyses S-methyl-5'-thioadenosine + H2O = 5-(methylsulfanyl)-D-ribose + adenine. It catalyses the reaction 5'-deoxyadenosine + H2O = 5-deoxy-D-ribose + adenine. The protein operates within amino-acid biosynthesis; L-methionine biosynthesis via salvage pathway; S-methyl-5-thio-alpha-D-ribose 1-phosphate from S-methyl-5'-thioadenosine (hydrolase route): step 1/2. Its function is as follows. Catalyzes the irreversible cleavage of the glycosidic bond in both 5'-methylthioadenosine (MTA) and S-adenosylhomocysteine (SAH/AdoHcy) to adenine and the corresponding thioribose, 5'-methylthioribose and S-ribosylhomocysteine, respectively. Also cleaves 5'-deoxyadenosine, a toxic by-product of radical S-adenosylmethionine (SAM) enzymes, into 5-deoxyribose and adenine. The protein is 5'-methylthioadenosine/S-adenosylhomocysteine nucleosidase of Vibrio campbellii (strain ATCC BAA-1116).